The following is a 255-amino-acid chain: MNSERSDVTLYQPFLDYAIAYMRSRLDLEPYPIPTGFESNSAVVGKGKNQEEVVTTSYAFQTAKLRQIRAAHVQGGNSLQVLNFVIFPHLNYDLPFFGADLVTLPGGHLIALDMQPLFRDDSAYQAKYTEPILPIFHAHQQHLSWGGDFPEEAQPFFSPAFLWTRPQETAVVETQVFAAFKDYLKAYLDFVEQAEAVTDSQNLVAIKQAQLRYLRYRAEKDPARGMFKRFYGAEWTEEYIHGFLFDLERKLTVVK.

Belongs to the HY2 family.

The catalysed reaction is (3Z)-phycoerythrobilin + oxidized 2[4Fe-4S]-[ferredoxin] = 15,16-dihydrobiliverdin + reduced 2[4Fe-4S]-[ferredoxin] + 2 H(+). In terms of biological role, catalyzes the two-electron reduction of the C2 and C3(1) diene system of 15,16-dihydrobiliverdin. In Nostoc punctiforme (strain ATCC 29133 / PCC 73102), this protein is Phycoerythrobilin:ferredoxin oxidoreductase (pebB).